A 334-amino-acid polypeptide reads, in one-letter code: MNIIMAGIDYKLAPIDVREGFSFTKAMMKQVYSNILKDTMIYGTVIISTCNRTEIYISCEEDFCVNPFEVLCNAAGIDFTPYEKVHRVKEGDEVIKHLCQLACGVKSQIWGEDQIITQVKNAIAVSREMRAADSYLEVMFRNAIAAAKKVKSTLILNSRENSIVHKALKIIKDQETMNIREILVIGNGEMGRLMTNVLIENGYRATMTLRQYRYHANVIPLNANTVDYSNRYEKMKDCDVVISATLSPHYTVEMENLKKIDKIPKLFIDLAVPRDIDPSIKNLPNIELYDVDGIGADEISKNHAQQLKGIERIIEKYICDYHKWCLFKEGLGCI.

Residues 49–52, S107, 112–114, and Q118 contribute to the substrate site; these read TCNR and EDQ. Residue C50 is the Nucleophile of the active site. NADP(+) is bound at residue 186–191; the sequence is GNGEMG.

It belongs to the glutamyl-tRNA reductase family. As to quaternary structure, homodimer.

It carries out the reaction (S)-4-amino-5-oxopentanoate + tRNA(Glu) + NADP(+) = L-glutamyl-tRNA(Glu) + NADPH + H(+). Its pathway is porphyrin-containing compound metabolism; protoporphyrin-IX biosynthesis; 5-aminolevulinate from L-glutamyl-tRNA(Glu): step 1/2. Its function is as follows. Catalyzes the NADPH-dependent reduction of glutamyl-tRNA(Glu) to glutamate 1-semialdehyde (GSA). The protein is Glutamyl-tRNA reductase of Alkaliphilus oremlandii (strain OhILAs) (Clostridium oremlandii (strain OhILAs)).